Here is a 590-residue protein sequence, read N- to C-terminus: Ankyrin repeat-containing protein ITN1 (590 aa).

The disordered stretch occupies residues 25–44; it reads ENQNPMIDPSPTPSPSATAT. ANK repeat units follow at residues 73–102, 128–157, 163–192, 197–226, 231–260, 265–294, and 299–329; these read HNDT…SQME, LGET…RESI, SGYD…TLSQ, SNAT…NLLE, NNKN…QLAR, KGQT…AIVM, and SCNT…NANT. Helical transmembrane passes span 422-442, 460-480, 500-520, and 531-551; these read VTVV…TVPG, IFFI…VVQI, LMWL…YIVV, and VTVV…YYVV.

In terms of assembly, interacts with REM19/RTV1. In terms of tissue distribution, expressed in roots, shoots, leaf vasculature and stems.

Its subcellular location is the cell membrane. Its function is as follows. Involved in salt stress tolerance. May act through abscisic acid (ABA) signaling pathways and promote reactive oxygen species (ROS) production. The protein is Ankyrin repeat-containing protein ITN1 of Arabidopsis thaliana (Mouse-ear cress).